Consider the following 118-residue polypeptide: Large ribosomal subunit protein uL18 (118 aa).

It belongs to the universal ribosomal protein uL18 family. In terms of assembly, part of the 50S ribosomal subunit; part of the 5S rRNA/L5/L18/L25 subcomplex. Contacts the 5S and 23S rRNAs.

Functionally, this is one of the proteins that bind and probably mediate the attachment of the 5S RNA into the large ribosomal subunit, where it forms part of the central protuberance. This is Large ribosomal subunit protein uL18 from Brachyspira hyodysenteriae (strain ATCC 49526 / WA1).